The primary structure comprises 201 residues: Adenylyl-sulfate kinase (201 aa).

Residue 35–42 participates in ATP binding; that stretch reads GLSGSGKS. S109 acts as the Phosphoserine intermediate in catalysis.

This sequence belongs to the APS kinase family.

It catalyses the reaction adenosine 5'-phosphosulfate + ATP = 3'-phosphoadenylyl sulfate + ADP + H(+). It participates in sulfur metabolism; hydrogen sulfide biosynthesis; sulfite from sulfate: step 2/3. In terms of biological role, catalyzes the synthesis of activated sulfate. The protein is Adenylyl-sulfate kinase of Salmonella gallinarum (strain 287/91 / NCTC 13346).